We begin with the raw amino-acid sequence, 225 residues long: Glutathione S-transferase A (225 aa).

In terms of domain architecture, GST N-terminal spans 3 to 85; sequence KDMTLLWGSG…YLESQFKSQG (83 aa). Residue R18 coordinates glutathione. Positions 92–217 constitute a GST C-terminal domain; it reads CPAEQAMMYQ…WPPTWLESPQ (126 aa).

This sequence belongs to the GST superfamily. Theta family. As to quaternary structure, homodimer. As to expression, found in all the tissues examined. Highest values found in liver and in intestinal mucosa.

The protein localises to the cytoplasm. The catalysed reaction is RX + glutathione = an S-substituted glutathione + a halide anion + H(+). Conjugation of reduced glutathione to a wide number of exogenous and endogenous hydrophobic electrophiles. This is Glutathione S-transferase A from Pleuronectes platessa (European plaice).